A 306-amino-acid chain; its full sequence is Ribonuclease Z (306 aa).

Zn(2+) is bound by residues histidine 63, histidine 65, aspartate 67, histidine 68, histidine 141, aspartate 211, and histidine 269. The active-site Proton acceptor is the aspartate 67.

It belongs to the RNase Z family. In terms of assembly, homodimer. The cofactor is Zn(2+).

It carries out the reaction Endonucleolytic cleavage of RNA, removing extra 3' nucleotides from tRNA precursor, generating 3' termini of tRNAs. A 3'-hydroxy group is left at the tRNA terminus and a 5'-phosphoryl group is left at the trailer molecule.. Functionally, zinc phosphodiesterase, which displays some tRNA 3'-processing endonuclease activity. Probably involved in tRNA maturation, by removing a 3'-trailer from precursor tRNA. This chain is Ribonuclease Z, found in Staphylococcus aureus (strain USA300).